Here is a 709-residue protein sequence, read N- to C-terminus: ATP-binding cassette sub-family F member 3 (709 aa).

Ala-2 carries the N-acetylalanine modification. The segment covering 129–143 (RLKAKQEKRSEKETL) has biased composition (basic and acidic residues). The tract at residues 129 to 171 (RLKAKQEKRSEKETLKTSSPLVLEEASASQAGSRKESRLESSG) is disordered. Phosphoserine occurs at positions 155, 157, and 161. The segment covering 161 to 171 (SRKESRLESSG) has biased composition (basic and acidic residues). ABC transporter domains lie at 178–424 (VRIE…LNQQ) and 492–707 (LQLD…RREG). Position 210–217 (210–217 (GRNGLGKT)) interacts with ATP. Position 283 is a phosphoserine (Ser-283). An ATP-binding site is contributed by 525–532 (GENGAGKS).

The protein belongs to the ABC transporter superfamily. ABCF family. EF3 subfamily.

Displays an antiviral effect against flaviviruses such as west Nile virus (WNV) in the presence of OAS1B. In Rattus norvegicus (Rat), this protein is ATP-binding cassette sub-family F member 3 (Abcf3).